A 397-amino-acid chain; its full sequence is Acetate kinase 2 (397 aa).

Residue N10 coordinates Mg(2+). An ATP-binding site is contributed by K17. R90 provides a ligand contact to substrate. The Proton donor/acceptor role is filled by D147. ATP is bound by residues 207-211, 281-283, and 329-333; these read HLGNG, DAR, and GIGEN. E385 is a Mg(2+) binding site.

This sequence belongs to the acetokinase family. As to quaternary structure, homodimer. It depends on Mg(2+) as a cofactor. Requires Mn(2+) as cofactor.

The protein resides in the cytoplasm. The catalysed reaction is acetate + ATP = acetyl phosphate + ADP. It functions in the pathway metabolic intermediate biosynthesis; acetyl-CoA biosynthesis; acetyl-CoA from acetate: step 1/2. Catalyzes the formation of acetyl phosphate from acetate and ATP. Can also catalyze the reverse reaction. The chain is Acetate kinase 2 from Vibrio parahaemolyticus serotype O3:K6 (strain RIMD 2210633).